Consider the following 200-residue polypeptide: Recombination protein RecR (200 aa).

Residues 60-75 form a C4-type zinc finger; sequence CVYCQALTEDDVCNIC. The Toprim domain occupies 83-177; the sequence is TKLCIIESML…KISRIGFGVP (95 aa).

Belongs to the RecR family.

In terms of biological role, may play a role in DNA repair. It seems to be involved in an RecBC-independent recombinational process of DNA repair. It may act with RecF and RecO. The protein is Recombination protein RecR of Francisella tularensis subsp. holarctica (strain OSU18).